A 239-amino-acid polypeptide reads, in one-letter code: Cytochrome c oxidase subunit 2 (239 aa).

The Mitochondrial intermembrane portion of the chain corresponds to 1–26 (MATPAQLGLMDAASPVMEEMIYFHDH). A helical membrane pass occupies residues 27–48 (VMLVLILITCLIFYSMLVLISS). Topologically, residues 49–62 (KYIYRFLTDGHVIE) are mitochondrial matrix. A helical transmembrane segment spans residues 63–82 (TVWTVIPAIILVVVALPSLK). At 83–239 (LLYLTDELDN…ESLGSLNMKR (157 aa)) the chain is on the mitochondrial intermembrane side. The Cu cation site is built by H161, C196, E198, C200, H204, and M207. Residue E198 participates in Mg(2+) binding.

Belongs to the cytochrome c oxidase subunit 2 family. Component of the cytochrome c oxidase (complex IV, CIV), a multisubunit enzyme composed of a catalytic core of 3 subunits and several supernumerary subunits. The complex exists as a monomer or a dimer and forms supercomplexes (SCs) in the inner mitochondrial membrane with ubiquinol-cytochrome c oxidoreductase (cytochrome b-c1 complex, complex III, CIII). Requires Cu cation as cofactor.

Its subcellular location is the mitochondrion inner membrane. The catalysed reaction is 4 Fe(II)-[cytochrome c] + O2 + 8 H(+)(in) = 4 Fe(III)-[cytochrome c] + 2 H2O + 4 H(+)(out). Functionally, component of the cytochrome c oxidase, the last enzyme in the mitochondrial electron transport chain which drives oxidative phosphorylation. The respiratory chain contains 3 multisubunit complexes succinate dehydrogenase (complex II, CII), ubiquinol-cytochrome c oxidoreductase (cytochrome b-c1 complex, complex III, CIII) and cytochrome c oxidase (complex IV, CIV), that cooperate to transfer electrons derived from NADH and succinate to molecular oxygen, creating an electrochemical gradient over the inner membrane that drives transmembrane transport and the ATP synthase. Cytochrome c oxidase is the component of the respiratory chain that catalyzes the reduction of oxygen to water. Electrons originating from reduced cytochrome c in the intermembrane space (IMS) are transferred via the dinuclear copper A center (CU(A)) of subunit 2 and heme A of subunit 1 to the active site in subunit 1, a binuclear center (BNC) formed by heme A3 and copper B (CU(B)). The BNC reduces molecular oxygen to 2 water molecules using 4 electrons from cytochrome c in the IMS and 4 protons from the mitochondrial matrix. The polypeptide is Cytochrome c oxidase subunit 2 (COII) (Branchiostoma lanceolatum (Common lancelet)).